A 416-amino-acid chain; its full sequence is Multifunctional CCA protein (416 aa).

ATP is bound by residues glycine 8 and arginine 11. CTP-binding residues include glycine 8 and arginine 11. The Mg(2+) site is built by aspartate 21 and aspartate 23. 3 residues coordinate ATP: arginine 91, arginine 137, and arginine 140. Residues arginine 91, arginine 137, and arginine 140 each coordinate CTP. Residues 228–329 enclose the HD domain; the sequence is TGLHTMMVLA…IKLFDKADFW (102 aa).

This sequence belongs to the tRNA nucleotidyltransferase/poly(A) polymerase family. Bacterial CCA-adding enzyme type 1 subfamily. In terms of assembly, monomer. Can also form homodimers and oligomers. The cofactor is Mg(2+). Requires Ni(2+) as cofactor.

The catalysed reaction is a tRNA precursor + 2 CTP + ATP = a tRNA with a 3' CCA end + 3 diphosphate. It carries out the reaction a tRNA with a 3' CCA end + 2 CTP + ATP = a tRNA with a 3' CCACCA end + 3 diphosphate. Its function is as follows. Catalyzes the addition and repair of the essential 3'-terminal CCA sequence in tRNAs without using a nucleic acid template. Adds these three nucleotides in the order of C, C, and A to the tRNA nucleotide-73, using CTP and ATP as substrates and producing inorganic pyrophosphate. tRNA 3'-terminal CCA addition is required both for tRNA processing and repair. Also involved in tRNA surveillance by mediating tandem CCA addition to generate a CCACCA at the 3' terminus of unstable tRNAs. While stable tRNAs receive only 3'-terminal CCA, unstable tRNAs are marked with CCACCA and rapidly degraded. This is Multifunctional CCA protein from Shewanella sp. (strain MR-7).